The primary structure comprises 275 residues: Chlorophyll a-b binding protein 3, chloroplastic (275 aa).

Trp58 contacts chlorophyll b. Chlorophyll a contacts are provided by Phe78, Ser84, and Glu102. 4 residues coordinate chlorophyll b: Arg107, Ile142, Glu169, and Arg172. Lys226, Glu227, Asn230, Arg232, Gln244, and His259 together coordinate chlorophyll a. A helical membrane pass occupies residues 233–253 (LAMLAILGYFIQGLVTGVGPY).

It belongs to the light-harvesting chlorophyll a/b-binding (LHC) protein family. The LHC complex consists of chlorophyll a-b binding proteins. The cofactor is Binds at least 14 chlorophylls (8 Chl-a and 6 Chl-b) and carotenoids such as lutein and neoxanthin.. Photoregulated by reversible phosphorylation of its threonine residues.

It is found in the plastid. It localises to the chloroplast thylakoid membrane. In terms of biological role, the light-harvesting complex (LHC) functions as a light receptor, it captures and delivers excitation energy to photosystems with which it is closely associated. Functionally, may channel protons produced in the catalytic Mn center of water oxidation into the thylakoid lumen. This chain is Chlorophyll a-b binding protein 3, chloroplastic, found in Pisum sativum (Garden pea).